A 715-amino-acid chain; its full sequence is Polyribonucleotide nucleotidyltransferase (715 aa).

2 residues coordinate Mg(2+): D491 and D497. Residues 558-617 (PKIMTMTINPEKIRDVIGPQGRVINKIIEETGVKIDIEQDGRVFIASINHEANLRAKQII) enclose the KH domain. The S1 motif domain maps to 627 to 695 (GQVYLGTVKR…DQGRVNLSRK (69 aa)).

The protein belongs to the polyribonucleotide nucleotidyltransferase family. It depends on Mg(2+) as a cofactor.

The protein resides in the cytoplasm. It carries out the reaction RNA(n+1) + phosphate = RNA(n) + a ribonucleoside 5'-diphosphate. Functionally, involved in mRNA degradation. Catalyzes the phosphorolysis of single-stranded polyribonucleotides processively in the 3'- to 5'-direction. The sequence is that of Polyribonucleotide nucleotidyltransferase from Brevibacillus brevis (strain 47 / JCM 6285 / NBRC 100599).